A 432-amino-acid polypeptide reads, in one-letter code: Transcription factor E2F1 (432 aa).

2 disordered regions span residues 39-85 and 98-126; these read DVGA…GRPP and YLAG…KSRY. A cyclin A:CDK2 binding region spans residues 65–106; the sequence is ATPQAPRPAPSAPRPALGRPPVKRRLDLETDHQYLAGSSGPF. Residues 87 to 189 are interaction with BIRC2/c-IAP1; the sequence is KRRLDLETDH…KKSKNHIQWL (103 aa). The DNA-binding element occupies 108–192; that stretch reads GRGRHPGKGV…KNHIQWLGSR (85 aa). K115, K118, and K123 each carry N6-acetyllysine. The tract at residues 151-172 is leucine-zipper; that stretch reads LNWAAEVLKVQKRRIYDITNVL. A DEF box motif is present at residues 156–192; that stretch reads EVLKVQKRRIYDITNVLEGIQLIAKKSKNHIQWLGSR. The residue at position 183 (K183) is an N6-methyllysine; by SETD7. The interval 190–377 is required for interaction with TRIM28; that stretch reads GSRTMVGIGQ…RLSPLVAADS (188 aa). The tract at residues 193-282 is dimerization; that stretch reads TMVGIGQRLE…AVDSAETFQI (90 aa). The tract at residues 297 to 342 is disordered; that stretch reads PEESAEGISPGRTSYQETSGEDRNADSGTAGPPPSPPSTSPTLDPS. The tract at residues 363-432 is transactivation; sequence PMEEDRLSPL…DFGDLTPLDF (70 aa). Phosphoserine occurs at positions 370 and 398. The RB1 binding stretch occupies residues 404-421; it reads VDYHFGLEEGEGIRDLFD. The residue at position 428 (T428) is a Phosphothreonine.

This sequence belongs to the E2F/DP family. As to quaternary structure, component of the DRTF1/E2F transcription factor complex. Forms heterodimers with DP family members. The E2F1 complex binds specifically hypophosphorylated RB1, the interaction represses E2F1-driven transcription. During the cell cycle, RB1 becomes phosphorylated in mid-to-late G1 phase, detaches from the DRTF1/E2F complex, rendering E2F transcriptionally active. Interacts with TRRAP, which probably mediates its interaction with histone acetyltransferase complexes, leading to transcription activation. Binds TOPBP1 and EAPP. Interacts with ARID3A. Interacts with TRIM28; the interaction inhibits E2F1 acetylation through recruiting HDAC1 and represses its transcriptional activity. Interaction with KAT2B; the interaction acetylates E2F1 enhancing its DNA-binding and transcriptional activity. Interacts with BIRC2/c-IAP1 (via BIR domains). The complex TFDP1:E2F1 interacts with CEBPA; the interaction prevents CEBPA binding to target genes promoters and represses its transcriptional activity. Interacts with RRP1B. Interacts with HCFC1. Interacts with KMT2E; the interaction is probably indirect and is mediated via HCFC1. Interacts with DCAF5 and L3MBTL3; the interaction requires methylation at Lys-183 and is necessary to target E2F1 for ubiquitination by the CRL4-DCAF5 E3 ubiquitin ligase complex. Post-translationally, phosphorylated by CDK2 and cyclin A-CDK2 in the S-phase. Phosphorylation by CHEK2 stabilizes E2F1 upon DNA damage and regulates its effect on transcription and apoptosis. Phosphorylation at Ser-398 by GSK3B promotes interaction with USP11, leading to its deubiquitination and stabilization. Ubiquitinated via 'Lys-63'-linked ubiquitin, leading to its degradation. Deubiquitinated by USP11 following phosphorylation by GSK3B, promoting its stability. In terms of processing, acetylation stimulates DNA-binding. Enhanced under stress conditions such as DNA damage and inhibited by retinoblastoma protein RB1. Regulated by KAP1/TRIM28 which recruits HDAC1 to E2F1 resulting in deacetylation. Post-translationally, methylation at Lys-183 by SETD7 promotes E2F1 ubiquitin-dependent proteasomal degradation.

It localises to the nucleus. BIRC2/c-IAP1 stimulates its transcriptional activity. Its function is as follows. Transcription activator that binds DNA cooperatively with DP proteins through the E2 recognition site, 5'-TTTC[CG]CGC-3' found in the promoter region of a number of genes whose products are involved in cell cycle regulation or in DNA replication. The DRTF1/E2F complex functions in the control of cell-cycle progression from G1 to S phase. E2F1 binds preferentially RB1 in a cell-cycle dependent manner. It can mediate both cell proliferation and TP53/p53-dependent apoptosis. Blocks adipocyte differentiation by binding to specific promoters repressing CEBPA binding to its target gene promoters. Directly activates transcription of PEG10. Positively regulates transcription of RRP1B. This Rattus norvegicus (Rat) protein is Transcription factor E2F1.